A 253-amino-acid chain; its full sequence is tRNA (guanine-N(7)-)-methyltransferase (253 aa).

The span at 1-12 (MSQTPMPQPDQA) shows a compositional bias: pro residues. The disordered stretch occupies residues 1–39 (MSQTPMPQPDQAPPVDVGQPVDEAEAKRRRFKTHGRKKG). Residues 27-39 (KRRRFKTHGRKKG) show a composition bias toward basic residues. E84, D109, N136, and D159 together coordinate S-adenosyl-L-methionine. Residue D159 is part of the active site. Residues K163, D195, and 232 to 235 (TNFE) contribute to the substrate site.

The protein belongs to the class I-like SAM-binding methyltransferase superfamily. TrmB family.

The catalysed reaction is guanosine(46) in tRNA + S-adenosyl-L-methionine = N(7)-methylguanosine(46) in tRNA + S-adenosyl-L-homocysteine. It functions in the pathway tRNA modification; N(7)-methylguanine-tRNA biosynthesis. Its function is as follows. Catalyzes the formation of N(7)-methylguanine at position 46 (m7G46) in tRNA. This chain is tRNA (guanine-N(7)-)-methyltransferase, found in Magnetococcus marinus (strain ATCC BAA-1437 / JCM 17883 / MC-1).